A 125-amino-acid polypeptide reads, in one-letter code: MKKEHASAFRQLWRAGMAAAISTRFPGHRFVIRDLLRNGFRQNNCSFYSKEKVENTVIFLEMAASRKSVEHLILKNRLHIQMFRRKAGQRLAHYSTAKERPYFLSAYDTYEWCLQRVGTIYNLYL.

This sequence belongs to the UPF0593 family.

It localises to the mitochondrion. This Schizosaccharomyces pombe (strain 972 / ATCC 24843) (Fission yeast) protein is UPF0593 mitochondrial protein C806.05.